The primary structure comprises 131 residues: Phosphoribosyl-AMP cyclohydrolase (131 aa).

Aspartate 89 contributes to the Mg(2+) binding site. Cysteine 90 contacts Zn(2+). Positions 91 and 93 each coordinate Mg(2+). Zn(2+) is bound by residues cysteine 106 and cysteine 113.

It belongs to the PRA-CH family. Homodimer. It depends on Mg(2+) as a cofactor. Zn(2+) is required as a cofactor.

It is found in the cytoplasm. It carries out the reaction 1-(5-phospho-beta-D-ribosyl)-5'-AMP + H2O = 1-(5-phospho-beta-D-ribosyl)-5-[(5-phospho-beta-D-ribosylamino)methylideneamino]imidazole-4-carboxamide. The protein operates within amino-acid biosynthesis; L-histidine biosynthesis; L-histidine from 5-phospho-alpha-D-ribose 1-diphosphate: step 3/9. Catalyzes the hydrolysis of the adenine ring of phosphoribosyl-AMP. The protein is Phosphoribosyl-AMP cyclohydrolase of Pyrobaculum aerophilum (strain ATCC 51768 / DSM 7523 / JCM 9630 / CIP 104966 / NBRC 100827 / IM2).